Consider the following 227-residue polypeptide: uncharacterized protein (227 aa).

The first 23 residues, 1 to 23 (MKKLTVTFLTFISIFFAATAAFA), serve as a signal peptide directing secretion.

This is an uncharacterized protein from Coxiella burnetii (strain RSA 493 / Nine Mile phase I).